The primary structure comprises 514 residues: Pantetheinase (514 aa).

The first 22 residues, 1–22, serve as a signal peptide directing secretion; sequence MITSRLLVYVAVLVLCVIKVSS. A glycan (N-linked (GlcNAc...) asparagine) is linked at N39. One can recognise a CN hydrolase domain in the interval 40-307; it reads ATLVPVSHEE…GKLLLSQLDS (268 aa). Residue E80 is the Proton acceptor of the active site. Residues N87 and N147 are each glycosylated (N-linked (GlcNAc...) asparagine). Residue K179 is the Proton donor of the active site. The Nucleophile role is filled by C212. 2 N-linked (GlcNAc...) asparagine glycosylation sites follow: N316 and N354. D492 is lipidated: GPI-anchor amidated aspartate. Residues 493 to 514 constitute a propeptide, removed in mature form; the sequence is PRSQVPGVMLLVIIPIVCSLSW.

It belongs to the carbon-nitrogen hydrolase superfamily. BTD/VNN family. Monomer.

It is found in the cell membrane. It carries out the reaction (R)-pantetheine + H2O = cysteamine + (R)-pantothenate. Amidohydrolase that hydrolyzes specifically one of the carboamide linkages in D-pantetheine thus recycling pantothenic acid (vitamin B5) and releasing cysteamine. This is Pantetheinase (VNN1) from Canis lupus familiaris (Dog).